Here is a 441-residue protein sequence, read N- to C-terminus: tRNA-2-methylthio-N(6)-dimethylallyladenosine synthase (441 aa).

Residues 5 to 120 enclose the MTTase N-terminal domain; it reads KLLYIETFGC…LPEMVRAAEQ (116 aa). 6 residues coordinate [4Fe-4S] cluster: cysteine 14, cysteine 50, cysteine 83, cysteine 158, cysteine 162, and cysteine 165. The Radical SAM core domain occupies 144-374; the sequence is EGGGVTRFVT…QGLQRDMTIE (231 aa). Residues 377–439 form the TRAM domain; it reads AGFVGTCQAV…PNSLLGELAV (63 aa).

It belongs to the methylthiotransferase family. MiaB subfamily. Monomer. The cofactor is [4Fe-4S] cluster.

The protein localises to the cytoplasm. It carries out the reaction N(6)-dimethylallyladenosine(37) in tRNA + (sulfur carrier)-SH + AH2 + 2 S-adenosyl-L-methionine = 2-methylsulfanyl-N(6)-dimethylallyladenosine(37) in tRNA + (sulfur carrier)-H + 5'-deoxyadenosine + L-methionine + A + S-adenosyl-L-homocysteine + 2 H(+). Its function is as follows. Catalyzes the methylthiolation of N6-(dimethylallyl)adenosine (i(6)A), leading to the formation of 2-methylthio-N6-(dimethylallyl)adenosine (ms(2)i(6)A) at position 37 in tRNAs that read codons beginning with uridine. This chain is tRNA-2-methylthio-N(6)-dimethylallyladenosine synthase, found in Geobacter metallireducens (strain ATCC 53774 / DSM 7210 / GS-15).